A 487-amino-acid polypeptide reads, in one-letter code: Glutamyl-tRNA(Gln) amidotransferase subunit A (487 aa).

Active-site charge relay system residues include K78 and S153. The active-site Acyl-ester intermediate is the S177.

It belongs to the amidase family. GatA subfamily. As to quaternary structure, heterotrimer of A, B and C subunits.

It catalyses the reaction L-glutamyl-tRNA(Gln) + L-glutamine + ATP + H2O = L-glutaminyl-tRNA(Gln) + L-glutamate + ADP + phosphate + H(+). In terms of biological role, allows the formation of correctly charged Gln-tRNA(Gln) through the transamidation of misacylated Glu-tRNA(Gln) in organisms which lack glutaminyl-tRNA synthetase. The reaction takes place in the presence of glutamine and ATP through an activated gamma-phospho-Glu-tRNA(Gln). In Oleidesulfovibrio alaskensis (strain ATCC BAA-1058 / DSM 17464 / G20) (Desulfovibrio alaskensis), this protein is Glutamyl-tRNA(Gln) amidotransferase subunit A.